Consider the following 487-residue polypeptide: Malonate-semialdehyde dehydrogenase 2 (487 aa).

The NAD(+) site is built by F154, K178, E181, R182, and S231. The active-site Nucleophile is the C286. E386 contacts NAD(+).

The protein belongs to the aldehyde dehydrogenase family. IolA subfamily. In terms of assembly, homotetramer.

It carries out the reaction 3-oxopropanoate + NAD(+) + CoA + H2O = hydrogencarbonate + acetyl-CoA + NADH + H(+). The catalysed reaction is 2-methyl-3-oxopropanoate + NAD(+) + CoA + H2O = propanoyl-CoA + hydrogencarbonate + NADH + H(+). It participates in polyol metabolism; myo-inositol degradation into acetyl-CoA; acetyl-CoA from myo-inositol: step 7/7. Functionally, catalyzes the oxidation of malonate semialdehyde (MSA) and methylmalonate semialdehyde (MMSA) into acetyl-CoA and propanoyl-CoA, respectively. Is involved in a myo-inositol catabolic pathway. Bicarbonate, and not CO2, is the end-product of the enzymatic reaction. This chain is Malonate-semialdehyde dehydrogenase 2, found in Bacillus anthracis.